We begin with the raw amino-acid sequence, 41 residues long: Photosystem I reaction center subunit IX (41 aa).

A helical transmembrane segment spans residues 7-27; the sequence is YLSSAPILATIWFAITAGILI.

It belongs to the PsaJ family.

Its subcellular location is the cellular thylakoid membrane. In terms of biological role, may help in the organization of the PsaE and PsaF subunits. This Synechococcus sp. (strain ATCC 27144 / PCC 6301 / SAUG 1402/1) (Anacystis nidulans) protein is Photosystem I reaction center subunit IX.